We begin with the raw amino-acid sequence, 328 residues long: Phosphate acyltransferase (328 aa).

The protein belongs to the PlsX family. Homodimer. Probably interacts with PlsY.

The protein resides in the cytoplasm. It catalyses the reaction a fatty acyl-[ACP] + phosphate = an acyl phosphate + holo-[ACP]. It participates in lipid metabolism; phospholipid metabolism. In terms of biological role, catalyzes the reversible formation of acyl-phosphate (acyl-PO(4)) from acyl-[acyl-carrier-protein] (acyl-ACP). This enzyme utilizes acyl-ACP as fatty acyl donor, but not acyl-CoA. This Staphylococcus aureus (strain USA300) protein is Phosphate acyltransferase.